The primary structure comprises 116 residues: Small ribosomal subunit protein bS16 (116 aa).

The protein belongs to the bacterial ribosomal protein bS16 family.

The polypeptide is Small ribosomal subunit protein bS16 (Chlamydia muridarum (strain MoPn / Nigg)).